We begin with the raw amino-acid sequence, 635 residues long: Chaperone protein HtpG (635 aa).

Residues 1-337 (MELKMHNVQE…SPDLPLNISR (337 aa)) are a; substrate-binding. The tract at residues 338 to 556 (ETLQNNRVVE…EGAMDLRMER (219 aa)) is b. Residues 557-635 (FLREQKQLNY…LNNLLGKISV (79 aa)) are c.

It belongs to the heat shock protein 90 family. As to quaternary structure, homodimer.

The protein resides in the cytoplasm. In terms of biological role, molecular chaperone. Has ATPase activity. The polypeptide is Chaperone protein HtpG (Wolbachia pipientis wMel).